A 209-amino-acid polypeptide reads, in one-letter code: Superoxide dismutase [Mn/Fe] (209 aa).

4 residues coordinate Fe(3+): His-38, His-90, Asp-172, and His-176. The Mn(2+) site is built by His-38, His-90, Asp-172, and His-176.

This sequence belongs to the iron/manganese superoxide dismutase family. Mn(2+) serves as cofactor. Requires Fe(3+) as cofactor.

The catalysed reaction is 2 superoxide + 2 H(+) = H2O2 + O2. In terms of biological role, destroys superoxide anion radicals which are normally produced within the cells and which are toxic to biological systems. Catalyzes the dismutation of superoxide anion radicals into O2 and H2O2 by successive reduction and oxidation of the transition metal ion at the active site. In Rickettsia conorii (strain ATCC VR-613 / Malish 7), this protein is Superoxide dismutase [Mn/Fe] (sodB).